A 464-amino-acid polypeptide reads, in one-letter code: Glutamate decarboxylase beta (464 aa).

At lysine 275 the chain carries N6-(pyridoxal phosphate)lysine.

Belongs to the group II decarboxylase family. Pyridoxal 5'-phosphate is required as a cofactor.

It carries out the reaction L-glutamate + H(+) = 4-aminobutanoate + CO2. Functionally, converts internalized glutamate to GABA and increases the internal pH. Involved in glutamate-dependent acid resistance in gastric fluid. The protein is Glutamate decarboxylase beta (gadB) of Listeria innocua serovar 6a (strain ATCC BAA-680 / CLIP 11262).